A 418-amino-acid polypeptide reads, in one-letter code: NADH-quinone oxidoreductase subunit D (418 aa).

The protein belongs to the complex I 49 kDa subunit family. In terms of assembly, NDH-1 is composed of 14 different subunits. Subunits NuoB, C, D, E, F, and G constitute the peripheral sector of the complex.

It is found in the cell inner membrane. It carries out the reaction a quinone + NADH + 5 H(+)(in) = a quinol + NAD(+) + 4 H(+)(out). NDH-1 shuttles electrons from NADH, via FMN and iron-sulfur (Fe-S) centers, to quinones in the respiratory chain. The immediate electron acceptor for the enzyme in this species is believed to be ubiquinone. Couples the redox reaction to proton translocation (for every two electrons transferred, four hydrogen ions are translocated across the cytoplasmic membrane), and thus conserves the redox energy in a proton gradient. The polypeptide is NADH-quinone oxidoreductase subunit D (Bordetella bronchiseptica (strain ATCC BAA-588 / NCTC 13252 / RB50) (Alcaligenes bronchisepticus)).